The primary structure comprises 323 residues: L-lactate dehydrogenase (323 aa).

Val11, Asp32, and Tyr63 together coordinate NAD(+). Residues Gln80 and Arg86 each contribute to the substrate site. NAD(+) is bound by residues Ser99, 116–118 (VSN), and Ser141. Residue 118–121 (NPVD) participates in substrate binding. Substrate is bound at residue 146-149 (DTAR). 2 residues coordinate beta-D-fructose 1,6-bisphosphate: Arg151 and His166. His173 acts as the Proton acceptor in catalysis. Residue Tyr221 is modified to Phosphotyrosine. Thr230 provides a ligand contact to substrate.

The protein belongs to the LDH/MDH superfamily. LDH family. In terms of assembly, homotetramer.

It localises to the cytoplasm. It carries out the reaction (S)-lactate + NAD(+) = pyruvate + NADH + H(+). The protein operates within fermentation; pyruvate fermentation to lactate; (S)-lactate from pyruvate: step 1/1. Allosterically activated by fructose 1,6-bisphosphate (FBP). Catalyzes the conversion of lactate to pyruvate. This Kosmotoga olearia (strain ATCC BAA-1733 / DSM 21960 / TBF 19.5.1) protein is L-lactate dehydrogenase.